A 207-amino-acid chain; its full sequence is MEITVTLVPINLRGAEEPERNQRFRLKPLCAAAEVCLAVKCRSPFAKFKVLISVTNFDNKHLQATVCSRHAAVCVVNAPGQREVVFDGFAKPDDEGATVPLVVGPLFAARQAGRCVRAAVDAIQRQQTVLKVFINEAYLQSAWGAVRGLFFSDNNHESDLTSNVGKFISVDPTDVGARGANSSKWVPAINYVTGRQLLTILFIFKFI.

Its function is as follows. This protein is required for viral late gene expression. The sequence is that of Putative early 22.7 kDa protein (DA18) from Orgyia pseudotsugata (Douglas-fir tussock moth).